Consider the following 630-residue polypeptide: Adenine DNA glycosylase (630 aa).

The segment covering 54 to 72 (MRKCREKKEAEREAEREAE) has biased composition (basic and acidic residues). The segment at 54 to 123 (MRKCREKKEA…ALGGDIEDLF (70 aa)) is disordered. Positions 73-123 (REAEEEEKAEEAEAEADKEEAEEESEEEEEEEEEEAEAEEEALGGDIEDLF) are enriched in acidic residues. E168 serves as the catalytic Proton donor/acceptor. Residues C341, C348, C351, and C357 each contribute to the [4Fe-4S] cluster site. A Nudix hydrolase domain is found at 383–536 (PRHDFCCVCV…RKVPPFRLQH (154 aa)). Residues 427-451 (VILNEEADSATRRNAINVYLKEAFR) carry the Nudix box motif.

This sequence belongs to the Nth/MutY family. The cofactor is [4Fe-4S] cluster.

It localises to the nucleus. The catalysed reaction is Hydrolyzes free adenine bases from 7,8-dihydro-8-oxoguanine:adenine mismatched double-stranded DNA, leaving an apurinic site.. Involved in oxidative DNA damage repair. Initiates repair of A*oxoG to C*G by removing the inappropriately paired adenine base from the DNA backbone. Possesses both adenine and 2-OH-A DNA glycosylase activities. The sequence is that of Adenine DNA glycosylase (MYH) from Arabidopsis thaliana (Mouse-ear cress).